The following is a 226-amino-acid chain: MNDYPGSGLHARTQAEYTGARAESRYVIPRFVERTSQGVREYDPYAKLFEERVIFLGVQIDDASANDVMAQLLCLESMDPDRDISVYINSPGGSFTALTAIYDTMQFVKPDIQTVCMGQAASAAAILLAAGTPGKRMALPNARVLIHQPYSETGRGQVSDLEIAANEILRMRSQLEDMLAKHSTTPIEKIREDIERDKILTAEDALAYGLIDQIISTRKMNNSAVA.

Ser122 serves as the catalytic Nucleophile. The active site involves His147.

The protein belongs to the peptidase S14 family. In terms of assembly, fourteen ClpP subunits assemble into 2 heptameric rings which stack back to back to give a disk-like structure with a central cavity, resembling the structure of eukaryotic proteasomes.

It localises to the cytoplasm. The enzyme catalyses Hydrolysis of proteins to small peptides in the presence of ATP and magnesium. alpha-casein is the usual test substrate. In the absence of ATP, only oligopeptides shorter than five residues are hydrolyzed (such as succinyl-Leu-Tyr-|-NHMec, and Leu-Tyr-Leu-|-Tyr-Trp, in which cleavage of the -Tyr-|-Leu- and -Tyr-|-Trp bonds also occurs).. Functionally, cleaves peptides in various proteins in a process that requires ATP hydrolysis. Has a chymotrypsin-like activity. Plays a major role in the degradation of misfolded proteins. The polypeptide is ATP-dependent Clp protease proteolytic subunit 4 (Streptomyces avermitilis (strain ATCC 31267 / DSM 46492 / JCM 5070 / NBRC 14893 / NCIMB 12804 / NRRL 8165 / MA-4680)).